A 424-amino-acid chain; its full sequence is Histidine--tRNA ligase (424 aa).

The protein belongs to the class-II aminoacyl-tRNA synthetase family. As to quaternary structure, homodimer.

The protein resides in the cytoplasm. The catalysed reaction is tRNA(His) + L-histidine + ATP = L-histidyl-tRNA(His) + AMP + diphosphate + H(+). This is Histidine--tRNA ligase from Thioalkalivibrio sulfidiphilus (strain HL-EbGR7).